The primary structure comprises 163 residues: Probable protein tyrosine phosphatase type IVA B (163 aa).

The region spanning 10 to 161 (TIIESSTHKF…YKASKKAGCK (152 aa)) is the Tyrosine-protein phosphatase domain. Cys-49 and Cys-104 form a disulfide bridge. The Proton donor role is filled by Asp-70. The active-site Phosphocysteine intermediate is the Cys-104. 105–110 (IAGLGR) is a binding site for phosphate. Arg-110 serves as a coordination point for substrate. A Cysteine methyl ester modification is found at Cys-160. Residue Cys-160 is the site of S-farnesyl cysteine attachment. The propeptide at 161 to 163 (KIM) is removed in mature form.

The protein belongs to the protein-tyrosine phosphatase family.

It localises to the membrane. The catalysed reaction is O-phospho-L-tyrosyl-[protein] + H2O = L-tyrosyl-[protein] + phosphate. In Dictyostelium discoideum (Social amoeba), this protein is Probable protein tyrosine phosphatase type IVA B.